Consider the following 194-residue polypeptide: Lipoprotein signal peptidase (194 aa).

Helical transmembrane passes span 75–95 (TIFL…MICS) and 97–117 (TIGS…NLID). Catalysis depends on residues aspartate 126 and aspartate 144. Residues 135–155 (YSFPVFNLADCFITLGVIILM) traverse the membrane as a helical segment.

Belongs to the peptidase A8 family.

The protein localises to the cell inner membrane. The catalysed reaction is Release of signal peptides from bacterial membrane prolipoproteins. Hydrolyzes -Xaa-Yaa-Zaa-|-(S,diacylglyceryl)Cys-, in which Xaa is hydrophobic (preferably Leu), and Yaa (Ala or Ser) and Zaa (Gly or Ala) have small, neutral side chains.. Its pathway is protein modification; lipoprotein biosynthesis (signal peptide cleavage). In terms of biological role, this protein specifically catalyzes the removal of signal peptides from prolipoproteins. This Rickettsia prowazekii (strain Madrid E) protein is Lipoprotein signal peptidase.